The primary structure comprises 234 residues: Phosphoribosylformylglycinamidine synthase subunit PurQ (234 aa).

The Glutamine amidotransferase type-1 domain occupies 4 to 234; it reads RIGVVTFPGS…TSILKKLVNA (231 aa). Cys87 functions as the Nucleophile in the catalytic mechanism. Residues His204 and Glu206 contribute to the active site.

As to quaternary structure, part of the FGAM synthase complex composed of 1 PurL, 1 PurQ and 2 PurS subunits.

The protein localises to the cytoplasm. The enzyme catalyses N(2)-formyl-N(1)-(5-phospho-beta-D-ribosyl)glycinamide + L-glutamine + ATP + H2O = 2-formamido-N(1)-(5-O-phospho-beta-D-ribosyl)acetamidine + L-glutamate + ADP + phosphate + H(+). It carries out the reaction L-glutamine + H2O = L-glutamate + NH4(+). It functions in the pathway purine metabolism; IMP biosynthesis via de novo pathway; 5-amino-1-(5-phospho-D-ribosyl)imidazole from N(2)-formyl-N(1)-(5-phospho-D-ribosyl)glycinamide: step 1/2. In terms of biological role, part of the phosphoribosylformylglycinamidine synthase complex involved in the purines biosynthetic pathway. Catalyzes the ATP-dependent conversion of formylglycinamide ribonucleotide (FGAR) and glutamine to yield formylglycinamidine ribonucleotide (FGAM) and glutamate. The FGAM synthase complex is composed of three subunits. PurQ produces an ammonia molecule by converting glutamine to glutamate. PurL transfers the ammonia molecule to FGAR to form FGAM in an ATP-dependent manner. PurS interacts with PurQ and PurL and is thought to assist in the transfer of the ammonia molecule from PurQ to PurL. This chain is Phosphoribosylformylglycinamidine synthase subunit PurQ, found in Streptomyces avermitilis (strain ATCC 31267 / DSM 46492 / JCM 5070 / NBRC 14893 / NCIMB 12804 / NRRL 8165 / MA-4680).